We begin with the raw amino-acid sequence, 371 residues long: Glutamate 5-kinase (371 aa).

Lys14 provides a ligand contact to ATP. Positions 54, 141, and 153 each coordinate substrate. Residue 173–174 (TD) coordinates ATP. In terms of domain architecture, PUA spans 280 to 357 (AGSLIVDAGA…SDIEQLLGYI (78 aa)).

This sequence belongs to the glutamate 5-kinase family.

It is found in the cytoplasm. The catalysed reaction is L-glutamate + ATP = L-glutamyl 5-phosphate + ADP. It participates in amino-acid biosynthesis; L-proline biosynthesis; L-glutamate 5-semialdehyde from L-glutamate: step 1/2. In terms of biological role, catalyzes the transfer of a phosphate group to glutamate to form L-glutamate 5-phosphate. The chain is Glutamate 5-kinase from Azoarcus sp. (strain BH72).